The sequence spans 991 residues: Pentatricopeptide repeat-containing protein At1g73710 (991 aa).

Disordered stretches follow at residues 1–27 and 61–81; these read MLQP…HHHH and SSSS…RKRK. The segment covering 15–27 has biased composition (basic residues); that stretch reads VRHHHHHHHHHHH. Residues 61–73 show a composition bias toward low complexity; that stretch reads SSSSVSPPRCSKP. PPR repeat units follow at residues 144-178, 179-213, 214-248, 304-338, 339-373, 374-408, 409-443, 444-474, 478-513, 514-548, 549-583, 584-618, 619-653, 654-688, 689-719, 723-757, 758-792, 862-896, and 897-931; these read NVIH…GVLP, TNNT…MHFP, DEVT…KVDL, LTST…GVPI, DTVT…GISP, DTKT…GLFP, DTVT…SIRI, DEHS…FQLD, SSTT…GQRN, DVLE…GTWP, DECT…GCKP, GCKT…GVKP, NEVV…GVQS, NHIV…EGGP, DVAA…LREK, DVIS…GLLS, DCTS…RKLL, EHFA…GLEP, and DIVT…ELEP. Residues 965–974 show a composition bias toward basic and acidic residues; sequence AERECSSRSG. A disordered region spans residues 965–991; the sequence is AERECSSRSGEEEEDDEEENSEEDEAF. The span at 975–991 shows a compositional bias: acidic residues; sequence EEEEDDEEENSEEDEAF.

Belongs to the PPR family. P subfamily.

In Arabidopsis thaliana (Mouse-ear cress), this protein is Pentatricopeptide repeat-containing protein At1g73710.